The primary structure comprises 579 residues: Transcription factor COE2 (579 aa).

Residues 63-66 (RKSN) are interaction with DNA. The C5-type zinc-finger motif lies at 149–168 (CRVLLTHEVMCSRCCEKKSC). 2 interaction with DNA regions span residues 195-202 (NCLKTAGN) and 234-237 (NNSK). The region spanning 260–343 (PCIKAISPSE…KGAPGRFIYT (84 aa)) is the IPT/TIG domain. Disordered regions lie at residues 442–482 (GVSI…YGSN), 514–533 (AIMPSSPPGSSSSSSLLPFS), and 549–579 (LRPQGFPHHPSAKTSGGTSFRAMTGLVVPPM). Residues 449-459 (GQTSGQGYTRN) are compositionally biased toward polar residues. Composition is skewed to low complexity over residues 460 to 472 (SSSLSPRGYPSSS) and 521 to 533 (PGSSSSSSLLPFS).

The protein belongs to the COE family.

The protein resides in the nucleus. This chain is Transcription factor COE2 (coe2), found in Danio rerio (Zebrafish).